The sequence spans 282 residues: Transcription factor MYB20 (282 aa).

2 consecutive HTH myb-type domains span residues 9–61 and 62–116; these read KVGL…TNYL and RPDL…KKKL. DNA-binding regions (H-T-H motif) lie at residues 37–61 and 89–112; these read WRAV…TNYL and WSKI…NTHI.

As to expression, expressed in chalaza of mature seeds, cotyledons, rosette leaves, cauline leaves, veins of stems, mature siliques, sepals and styles. Expressed at low levels in roots.

It is found in the nucleus. Transcription factor that acts as a positive regulator of abscisic acid (ABA) signaling in response to salt stress. Acts as a negative regulator ABI1, ABI2 and PP2CA, which are protein phosphatases 2C acting as negative regulator of ABA signaling. Binds to the DNA specific sequence and core element 5'-ACGT-3' found in the promoters of ABI1 and PP2CA to negatively regulate their expression during ABA-dependent salt stress response. In Arabidopsis thaliana (Mouse-ear cress), this protein is Transcription factor MYB20.